Reading from the N-terminus, the 822-residue chain is Pentatricopeptide repeat-containing protein At2g41720 (822 aa).

Residues methionine 1–aspartate 28 form a disordered region. PPR repeat units follow at residues alanine 106–glutamine 136, arginine 142–proline 176, aspartate 177–proline 211, serine 212–proline 246, aspartate 247–proline 281, aspartate 282–cysteine 316, aspartate 319–proline 353, asparagine 354–proline 388, aspartate 389–proline 423, asparagine 424–proline 458, asparagine 459–leucine 493, asparagine 494–alanine 528, aspartate 529–leucine 563, threonine 564–proline 598, aspartate 599–proline 633, aspartate 634–phenylalanine 668, threonine 669–tyrosine 699, serine 704–isoleucine 738, and asparagine 739–proline 773.

Belongs to the PPR family. P subfamily.

In Arabidopsis thaliana (Mouse-ear cress), this protein is Pentatricopeptide repeat-containing protein At2g41720 (EMB2654).